We begin with the raw amino-acid sequence, 999 residues long: Disks large-associated protein 1 (999 aa).

Disordered stretches follow at residues 155–213 (HSLE…GYWS), 395–418 (MAED…ARRA), and 918–989 (NWRP…DSIE). Residues 194–204 (RERCKSAEPKN) are compositionally biased toward basic and acidic residues. 2 stretches are compositionally biased toward basic and acidic residues: residues 923–932 (DPPERKERRL) and 947–965 (LARD…EARK). Positions 976-985 (VRQNSATESA) are enriched in polar residues. The PDZ-binding motif lies at 997 to 999 (TRL).

It belongs to the SAPAP family.

The protein resides in the cell membrane. Its subcellular location is the postsynaptic density. It is found in the synapse. In terms of biological role, part of the postsynaptic scaffold in neuronal cells. The polypeptide is Disks large-associated protein 1 (Danio rerio (Zebrafish)).